Reading from the N-terminus, the 318-residue chain is Protease HtpX homolog (318 aa).

Transmembrane regions (helical) follow at residues 6-26 (TAML…LIGG) and 28-48 (AGMM…YWNS). Residue H130 participates in Zn(2+) binding. E131 is a catalytic residue. A Zn(2+)-binding site is contributed by H134. Helical transmembrane passes span 145–165 (ITAT…FFGG) and 173–193 (PLGF…AMLV). E202 is a binding site for Zn(2+). Positions 284–318 (NVSTGPVRAVNPTRKSRSVPNTGRGGSQPPRGPWS) are disordered.

It belongs to the peptidase M48B family. Requires Zn(2+) as cofactor.

The protein localises to the cell inner membrane. The protein is Protease HtpX homolog of Rhizobium etli (strain CIAT 652).